A 282-amino-acid polypeptide reads, in one-letter code: 2-dehydro-3-deoxyphosphooctonate aldolase (282 aa).

Belongs to the KdsA family.

The protein resides in the cytoplasm. The enzyme catalyses D-arabinose 5-phosphate + phosphoenolpyruvate + H2O = 3-deoxy-alpha-D-manno-2-octulosonate-8-phosphate + phosphate. It participates in carbohydrate biosynthesis; 3-deoxy-D-manno-octulosonate biosynthesis; 3-deoxy-D-manno-octulosonate from D-ribulose 5-phosphate: step 2/3. The protein operates within bacterial outer membrane biogenesis; lipopolysaccharide biosynthesis. This Shewanella sp. (strain W3-18-1) protein is 2-dehydro-3-deoxyphosphooctonate aldolase.